The following is a 452-amino-acid chain: Exodeoxyribonuclease 7 large subunit (452 aa).

Belongs to the XseA family. In terms of assembly, heterooligomer composed of large and small subunits.

The protein resides in the cytoplasm. The enzyme catalyses Exonucleolytic cleavage in either 5'- to 3'- or 3'- to 5'-direction to yield nucleoside 5'-phosphates.. Its function is as follows. Bidirectionally degrades single-stranded DNA into large acid-insoluble oligonucleotides, which are then degraded further into small acid-soluble oligonucleotides. The polypeptide is Exodeoxyribonuclease 7 large subunit (Bacillus anthracis (strain A0248)).